Reading from the N-terminus, the 66-residue chain is Large ribosomal subunit protein uL29 (66 aa).

The protein belongs to the universal ribosomal protein uL29 family.

This Thermococcus gammatolerans (strain DSM 15229 / JCM 11827 / EJ3) protein is Large ribosomal subunit protein uL29.